We begin with the raw amino-acid sequence, 252 residues long: tRNA (guanine-N(1)-)-methyltransferase (252 aa).

S-adenosyl-L-methionine contacts are provided by residues glycine 113 and 133–138 (IGDYVL). Residues 229 to 238 (VARPAANAPA) show a composition bias toward low complexity. The interval 229–252 (VARPAANAPAKGESQKTPKNKTDG) is disordered. The span at 241 to 252 (ESQKTPKNKTDG) shows a compositional bias: basic and acidic residues.

This sequence belongs to the RNA methyltransferase TrmD family. In terms of assembly, homodimer.

The protein localises to the cytoplasm. It catalyses the reaction guanosine(37) in tRNA + S-adenosyl-L-methionine = N(1)-methylguanosine(37) in tRNA + S-adenosyl-L-homocysteine + H(+). Functionally, specifically methylates guanosine-37 in various tRNAs. The polypeptide is tRNA (guanine-N(1)-)-methyltransferase (Rhodopseudomonas palustris (strain HaA2)).